We begin with the raw amino-acid sequence, 695 residues long: Polyribonucleotide nucleotidyltransferase (695 aa).

2 residues coordinate Mg(2+): Asp486 and Asp492. A KH domain is found at Pro553–Val612. Residues Gly622–Lys690 form the S1 motif domain.

The protein belongs to the polyribonucleotide nucleotidyltransferase family. In terms of assembly, component of the RNA degradosome, which is a multiprotein complex involved in RNA processing and mRNA degradation. The cofactor is Mg(2+).

The protein resides in the cytoplasm. It catalyses the reaction RNA(n+1) + phosphate = RNA(n) + a ribonucleoside 5'-diphosphate. Its function is as follows. Involved in mRNA degradation. Catalyzes the phosphorolysis of single-stranded polyribonucleotides processively in the 3'- to 5'-direction. In Nitrosococcus oceani (strain ATCC 19707 / BCRC 17464 / JCM 30415 / NCIMB 11848 / C-107), this protein is Polyribonucleotide nucleotidyltransferase.